The sequence spans 203 residues: Ribonuclease HII (203 aa).

An RNase H type-2 domain is found at 18–203; that stretch reads GHYAGVDEVG…SFRPVREALA (186 aa). A divalent metal cation contacts are provided by D24, E25, and D116.

It belongs to the RNase HII family. Mn(2+) serves as cofactor. Requires Mg(2+) as cofactor.

The protein localises to the cytoplasm. It catalyses the reaction Endonucleolytic cleavage to 5'-phosphomonoester.. Functionally, endonuclease that specifically degrades the RNA of RNA-DNA hybrids. In Shewanella halifaxensis (strain HAW-EB4), this protein is Ribonuclease HII.